Consider the following 400-residue polypeptide: MKFRTINEANVSGKRVLVRVDFNVPMSQGKVCDNTRLERHKETICALQKRGAKIILLSHCSRPRGKIVPELSLRPVAKALETIMGQQIFFVEECIGAPVQTAVEALQEGQILLLENLRFYKEEEDNNADFAEALAQQGDLYVNDAFSVSHRAHASVEAITHYLPSYAGMALQRELQALEKGLDNPKKPVTAIVGGAKVSSKLFVLNHLVTKVDYLVIGGGMANNFLMAQGHNVGKSLCEPMLMDMVKDVIEKARESHCTLVLPVDAVVGLQCETGTPHHHCMIEAIPDEGMILDIGEHSIARINTVIDASATLVWNGPLGVFEVSPFDHGTIAVARYAAARSQKGHCVSIAGGGDTVFALNHAGVADDFTYLSTAGGAFLEWMEGKTLPGVLALMQDLKN.

Residues 21-23 (DFN), Arg-36, 59-62 (HCSR), Arg-118, and Arg-151 contribute to the substrate site. Residues Lys-201, Glu-323, and 353-356 (GGDT) each bind ATP.

It belongs to the phosphoglycerate kinase family. Monomer.

Its subcellular location is the cytoplasm. The catalysed reaction is (2R)-3-phosphoglycerate + ATP = (2R)-3-phospho-glyceroyl phosphate + ADP. It functions in the pathway carbohydrate degradation; glycolysis; pyruvate from D-glyceraldehyde 3-phosphate: step 2/5. The sequence is that of Phosphoglycerate kinase from Bartonella bacilliformis (strain ATCC 35685 / KC583 / Herrer 020/F12,63).